The sequence spans 345 residues: Serpentine receptor class beta-5 (345 aa).

Topologically, residues 1 to 22 are extracellular; that stretch reads MAEINQTKCDLAFQISYHPIYR. Asn-5 carries an N-linked (GlcNAc...) asparagine glycan. Residues 23-43 traverse the membrane as a helical segment; the sequence is LAQFWTLSVSLLAVPSLLYFL. Residues 44 to 57 lie on the Cytoplasmic side of the membrane; sequence LKRVLLLPFHGNLK. Residues 58–78 form a helical membrane-spanning segment; sequence CLLITYFSSIFLYALVLCFDF. Topologically, residues 79 to 103 are extracellular; the sequence is SYQCLIPFIVTTKCSLIIDQTLYKC. Residues 104–124 form a helical membrane-spanning segment; the sequence is GHMTSLFFLTTPMLLPFGFSI. Residues 125-142 lie on the Cytoplasmic side of the membrane; the sequence is ERFVAVGMAYKYEKMRTL. Residues 143–163 form a helical membrane-spanning segment; that stretch reads LGPILCFILVAPNFVVFYFLF. Over 164 to 189 the chain is Extracellular; sequence RDEQFTDSFISFLVLPNTPAVQFNNY. Residues 190–210 traverse the membrane as a helical segment; it reads LWFLLYAKIGNFCCNCVLLIF. The Cytoplasmic portion of the chain corresponds to 211–241; that stretch reads HKRFKNTYLKKKTSLSVRYALEEISNSSKFT. Residues 242–262 form a helical membrane-spanning segment; the sequence is LILTFTHLVFFGAYTIGSILV. The Extracellular portion of the chain corresponds to 263–280; it reads RTLGESFFGNFLNFYVAR. The chain crosses the membrane as a helical span at residues 281–301; the sequence is GVNCAVPTYNLLIAFVGLISL. Residues 302-345 are Cytoplasmic-facing; that stretch reads RQLNSRRHAKILTKVLIRVTGQEGARNYDDIIMQQWNTVSNRTR.

It belongs to the nematode receptor-like protein srb family. In terms of tissue distribution, expressed throughout the head.

It localises to the cell membrane. It is found in the perikaryon. Its subcellular location is the cell projection. The protein localises to the dendrite. G-protein coupled receptor. Plays a role in the navigational capacity of sperm and promotes the targeting of sperm derived from males to the fertilization site in the uterus of hermaphrodites. This is Serpentine receptor class beta-5 from Caenorhabditis elegans.